The following is a 417-amino-acid chain: Methyltransferase/ribosomally synthesized cyclic peptide lentinulin A precursor ledMA (417 aa).

Residues Met-1 to Lys-251 are methyltransferase domain. Active-site residues include Arg-72, Tyr-76, and Tyr-98. 8 residues coordinate S-adenosyl-L-methionine: Tyr-98, His-100, Val-103, Ala-130, Gln-172, Ala-213, Ser-244, and Thr-245. Positions Glu-252–Met-378 are clasp domain. Positions Pro-379–Pro-399 are precursor leader. N-methylisoleucine is present on Ile-401. 2 positions are modified to N-methylvaline: Val-403 and Val-404. Position 405 is an N-methylglycine (Gly-405). Val-406 and Val-407 each carry N-methylvaline. Gly-408 carries the post-translational modification N-methylglycine. Val-410 carries the N-methylvaline modification. Gly-411 carries the N-methylglycine modification. An N-methylvaline modification is found at Val-413.

This sequence in the N-terminal section; belongs to the precorrin methyltransferase family. In terms of assembly, homodimer. In terms of processing, ledMA automethylates at Ile-401, Val-403, Val-404, Gly-405, Val-406, Val-407, Gly-408, Val-410, Gly-411 and Val-413 before being processed by the prolyloligopeptidase ledP which likely forms a peptidyl ester upon removal of the follower propeptide, which then undergoes macrocyclization with the N-terminus of the modified core peptide. Peptide backbone alpha-N-methylations change the physicochemical properties of amide bonds to provide structural constraints and other favorable characteristics including biological membrane permeability to peptides.

It functions in the pathway mycotoxin biosynthesis. In terms of biological role, fusion protein of the methyltransferase ledM and the lentinulin A core peptide; part of the gene cluster that mediates the biosynthesis of lentinulin A, a highly methylated cyclic dodecapeptide with nematodicidal activity. Lentinulin A derives from the C-terminus of the ledMA protein, and it is the ledMA protein that methylates its own C-terminus using S-adenosyl methionine (SAM). The C-terminus is subsequently cleaved off and macrocyclized by the prolyloligopeptidase ledP to give the final product. The chain is Methyltransferase/ribosomally synthesized cyclic peptide lentinulin A precursor ledMA from Lentinula edodes (Shiitake mushroom).